The primary structure comprises 55 residues: Small integral membrane protein 11 (55 aa).

A helical transmembrane segment spans residues 9 to 29 (VPLLLYILAAKTLILCLAFAG). The stretch at 34-54 (QRRSLEGKLQAEKRKQSEKKA) forms a coiled coil.

In terms of tissue distribution, expressed in brain, heart, kidney, thymus, liver, stomach, muscle, lung, testis, ovary, skin and eye.

It localises to the membrane. The chain is Small integral membrane protein 11 from Mus musculus (Mouse).